The chain runs to 142 residues: MSNSRSVLAFDYGTKSIGVAIGQELTGTANPLAALKAKDGIPNWDDIGKILKEWQPDLVVVGLPLNLEGGELESITPRAKKFANRIHGRFGCVVELHDERLSTVEAKAELFEHGGYRALSKGNIDSQSAVVILESWFERQYG.

It belongs to the YqgF nuclease family.

It is found in the cytoplasm. Its function is as follows. Could be a nuclease involved in processing of the 5'-end of pre-16S rRNA. This Photobacterium profundum (strain SS9) protein is Putative pre-16S rRNA nuclease.